The following is a 278-amino-acid chain: Esterase dbaE (278 aa).

Catalysis depends on charge relay system residues serine 124, aspartate 220, and histidine 248.

The protein belongs to the LovG family.

Its pathway is secondary metabolite biosynthesis. Functionally, esterase; part of the gene cluster that mediates the biosynthesis of the antibiotic 2,4-dihydroxy-3-methyl-6-(2-oxopropyl)benzaldehyde (DHMBA) and its derivatives. The direct non-reducing polyketide synthase dbaI product is 2,4-dihydroxy-3-methyl-6-(2-oxopropyl)benzaldehyde (DHMBA), produced by condensation of one acetyl-CoA starter unit with 4 malonyl-CoA units and one methylation step. The FAD-dependent monooxygenase dbaH is responsible for the synthesis of yellow pigments derived from the oxidation of DHMBA. The roles of dbaB, C, E and F have still to be determined. The chain is Esterase dbaE from Emericella nidulans (strain FGSC A4 / ATCC 38163 / CBS 112.46 / NRRL 194 / M139) (Aspergillus nidulans).